The sequence spans 4579 residues: Sacsin (4579 aa).

One can recognise a Ubiquitin-like domain in the interval 9-84; the sequence is VPVTVLPGCV…FVNLQSKGLK (76 aa). Lys943 carries the N6-acetyllysine modification. Residues Ser1779 and Ser2511 each carry the phosphoserine modification. Thr2516 carries the post-translational modification Phosphothreonine. Ser3435 is modified (phosphoserine). Disordered regions lie at residues 4248–4273 and 4279–4298; these read PEESSQSRDSAPSTPTSPTEFLTPGL and LFSGRESHKTSSKHQSPKKL. The span at 4254-4267 shows a compositional bias: polar residues; the sequence is SRDSAPSTPTSPTE. Thr4261 is modified (phosphothreonine). Ser4264 carries the post-translational modification Phosphoserine. Residues 4288–4298 are compositionally biased toward basic residues; it reads TSSKHQSPKKL. The J domain maps to 4306 to 4393; that stretch reads ILKEVTSVVE…ASRFQSDKYS (88 aa). The segment at 4405–4427 is disordered; sequence ATSHKSERQQQNKEKCPPSAGQT. A compositionally biased stretch (basic and acidic residues) spans 4406–4420; sequence TSHKSERQQQNKEKC. An HEPN domain is found at 4451–4567; sequence LRQARANFSA…MRVMECTACI (117 aa).

In terms of tissue distribution, highly expressed in the central nervous system. Also found in skeletal muscle and at low levels in pancreas.

It is found in the cytoplasm. Co-chaperone which acts as a regulator of the Hsp70 chaperone machinery and may be involved in the processing of other ataxia-linked proteins. This chain is Sacsin (SACS), found in Homo sapiens (Human).